The following is a 338-amino-acid chain: Ketol-acid reductoisomerase (NADP(+)) (338 aa).

Positions 1–181 (MRVYYDKDCD…GGGRSGIIET (181 aa)) constitute a KARI N-terminal Rossmann domain. Residues 24–27 (YGSQ), Arg47, Ser50, Ser52, and 82–85 (DENQ) contribute to the NADP(+) site. The active site involves His107. Gly133 lines the NADP(+) pocket. The 146-residue stretch at 182–327 (TFKDETETDL…EKLRGMMPWI (146 aa)) folds into the KARI C-terminal knotted domain. Positions 190, 194, 226, and 230 each coordinate Mg(2+). Ser251 is a substrate binding site.

This sequence belongs to the ketol-acid reductoisomerase family. Mg(2+) serves as cofactor.

It carries out the reaction (2R)-2,3-dihydroxy-3-methylbutanoate + NADP(+) = (2S)-2-acetolactate + NADPH + H(+). The catalysed reaction is (2R,3R)-2,3-dihydroxy-3-methylpentanoate + NADP(+) = (S)-2-ethyl-2-hydroxy-3-oxobutanoate + NADPH + H(+). It functions in the pathway amino-acid biosynthesis; L-isoleucine biosynthesis; L-isoleucine from 2-oxobutanoate: step 2/4. It participates in amino-acid biosynthesis; L-valine biosynthesis; L-valine from pyruvate: step 2/4. Its function is as follows. Involved in the biosynthesis of branched-chain amino acids (BCAA). Catalyzes an alkyl-migration followed by a ketol-acid reduction of (S)-2-acetolactate (S2AL) to yield (R)-2,3-dihydroxy-isovalerate. In the isomerase reaction, S2AL is rearranged via a Mg-dependent methyl migration to produce 3-hydroxy-3-methyl-2-ketobutyrate (HMKB). In the reductase reaction, this 2-ketoacid undergoes a metal-dependent reduction by NADPH to yield (R)-2,3-dihydroxy-isovalerate. The chain is Ketol-acid reductoisomerase (NADP(+)) from Chromohalobacter salexigens (strain ATCC BAA-138 / DSM 3043 / CIP 106854 / NCIMB 13768 / 1H11).